We begin with the raw amino-acid sequence, 739 residues long: uncharacterized protein (739 aa).

Transmembrane regions (helical) follow at residues 53 to 73, 90 to 110, 114 to 134, 178 to 198, 421 to 441, 457 to 477, 491 to 511, and 532 to 552; these read LALGIALWMELGSPQWAALTV, WHLFGMVVGVISGITLVAAIP, LMFILLLAVGIGTFCMIGTFM, TYILLGIVLEASISGLFQLGL, LIWICTAWPSGLTFIMFVCIV, AFLRGACCAVVAAGILNLALM, GLAMMIGGLAFAYPPLTLPAV, and IVYFNTALPLVLGLLYASWMY.

The protein belongs to the aromatic acid exporter ArAE (TC 2.A.85) family.

The protein resides in the cell membrane. This is an uncharacterized protein from Gluconobacter oxydans (strain 621H) (Gluconobacter suboxydans).